The chain runs to 137 residues: Ribosome-binding factor A (137 aa).

Positions 110-137 (RIQQEKEGATDDRDQNDSGEDATPHSND) are disordered. Residues 112-125 (QQEKEGATDDRDQN) are compositionally biased toward basic and acidic residues.

The protein belongs to the RbfA family. In terms of assembly, monomer. Binds 30S ribosomal subunits, but not 50S ribosomal subunits or 70S ribosomes.

The protein localises to the cytoplasm. Its function is as follows. One of several proteins that assist in the late maturation steps of the functional core of the 30S ribosomal subunit. Associates with free 30S ribosomal subunits (but not with 30S subunits that are part of 70S ribosomes or polysomes). Required for efficient processing of 16S rRNA. May interact with the 5'-terminal helix region of 16S rRNA. This chain is Ribosome-binding factor A, found in Rhodopirellula baltica (strain DSM 10527 / NCIMB 13988 / SH1).